The sequence spans 183 residues: Translocon-associated protein subunit beta (183 aa).

Residues 1-17 (MRLLAFAVLALFAVTQA) form the signal peptide. The Lumenal segment spans residues 18–146 (EEGARLLASK…REFDRRFSPH (129 aa)). N88 carries an N-linked (GlcNAc...) asparagine glycan. A helical transmembrane segment spans residues 147 to 167 (FLDWAAFGVMTLPSIGVPLLL). Topologically, residues 168-183 (WYSSKRKYDTPKTKKN) are cytoplasmic.

This sequence belongs to the TRAP-beta family. In terms of assembly, heterotetramer of TRAP-alpha, TRAP-beta, TRAP-delta and TRAP-gamma. Interacts with STING1.

It localises to the endoplasmic reticulum membrane. In terms of biological role, TRAP proteins are part of a complex whose function is to bind calcium to the ER membrane and thereby regulate the retention of ER resident proteins. In Bos taurus (Bovine), this protein is Translocon-associated protein subunit beta (SSR2).